The primary structure comprises 433 residues: tRNA modification GTPase MnmE (433 aa).

(6S)-5-formyl-5,6,7,8-tetrahydrofolate is bound by residues Arg-24, Glu-81, and Arg-120. One can recognise a TrmE-type G domain in the interval 216–359 (GVEIVVLGAP…LLAALRARVE (144 aa)). Position 226 (Asn-226) interacts with K(+). GTP contacts are provided by residues 226–231 (NAGKST), 245–251 (SDIPGTT), 270–273 (DTAG), and 340–342 (SAR). Ser-230 contributes to the Mg(2+) binding site. K(+) is bound by residues Ser-245, Ile-247, and Thr-250. Mg(2+) is bound at residue Thr-251. Lys-433 contacts (6S)-5-formyl-5,6,7,8-tetrahydrofolate.

This sequence belongs to the TRAFAC class TrmE-Era-EngA-EngB-Septin-like GTPase superfamily. TrmE GTPase family. As to quaternary structure, homodimer. Heterotetramer of two MnmE and two MnmG subunits. K(+) serves as cofactor.

It is found in the cytoplasm. Its function is as follows. Exhibits a very high intrinsic GTPase hydrolysis rate. Involved in the addition of a carboxymethylaminomethyl (cmnm) group at the wobble position (U34) of certain tRNAs, forming tRNA-cmnm(5)s(2)U34. The protein is tRNA modification GTPase MnmE of Acidiphilium cryptum (strain JF-5).